The chain runs to 251 residues: Probable inactive cytidine deaminase 4 (251 aa).

61–63 serves as a coordination point for substrate; that stretch reads NVE. Residue Glu76 is the Proton donor of the active site. Residues 136–251 form the CMP/dCMP-type deaminase domain; sequence EHCSHLKCRA…VFRCHKTAEN (116 aa).

The protein belongs to the cytidine and deoxycytidylate deaminase family. In terms of assembly, homodimer.

This is Probable inactive cytidine deaminase 4 (CDA4) from Arabidopsis thaliana (Mouse-ear cress).